Here is a 174-residue protein sequence, read N- to C-terminus: MKKVVKYLISLILAIIIVLFVQTFVIVGHVIPNNDMSPTLNKGDRVIVNKIKVTFNQLNNGDIITYRRGNEIYTSRIIAKPGQSMAFRQGQLYRDDRPVDASYAKNRKIKDFSLRNFKELDGDIIPPNNFVVLNDQDNNKHDSRQFGLIDKKDIIGNVSLRYYPFSKWTVQFKS.

Residues 1 to 7 (MKKVVKY) are Cytoplasmic-facing. Residues 8-28 (LISLILAIIIVLFVQTFVIVG) traverse the membrane as a helical segment. The Extracellular portion of the chain corresponds to 29–174 (HVIPNNDMSP…FSKWTVQFKS (146 aa)).

Belongs to the peptidase S26 family.

It localises to the cell membrane. Catalytically inactive. In Staphylococcus aureus (strain COL), this protein is Inactive signal peptidase IA (spsA).